Reading from the N-terminus, the 195-residue chain is Glutathione S-transferase class-mu 26 kDa isozyme (195 aa).

The GST N-terminal domain occupies 1–83 (MAPKLGYWKI…YIADKHNMLG (83 aa)). Residues 7–8 (YW), 41–45 (WRNEK), 54–55 (NL), and 67–68 (QS) contribute to the glutathione site. Positions 85–195 (CPKERAEISM…TFGGGDAPPK (111 aa)) constitute a GST C-terminal domain. Tyrosine 111 contacts substrate.

It belongs to the GST superfamily. Mu family. In terms of assembly, homodimer.

The catalysed reaction is RX + glutathione = an S-substituted glutathione + a halide anion + H(+). Functionally, conjugation of reduced glutathione to a wide number of exogenous and endogenous hydrophobic electrophiles. GST isoenzymes appear to play a central role in the parasite detoxification system. Other functions are also suspected including a role in increasing the solubility of haematin in the parasite gut. The chain is Glutathione S-transferase class-mu 26 kDa isozyme from Schistosoma mansoni (Blood fluke).